The chain runs to 119 residues: Large ribosomal subunit protein bL20c (119 aa).

It belongs to the bacterial ribosomal protein bL20 family.

It localises to the plastid. The protein resides in the chloroplast. Binds directly to 23S ribosomal RNA and is necessary for the in vitro assembly process of the 50S ribosomal subunit. It is not involved in the protein synthesizing functions of that subunit. In Brachypodium distachyon (Purple false brome), this protein is Large ribosomal subunit protein bL20c.